Consider the following 80-residue polypeptide: Ribosome assembly protein 3 (80 aa).

A compositionally biased stretch (basic and acidic residues) spans 1–10 (MATNDQKIDN). Residues 1 to 35 (MATNDQKIDNKSTVSNMLENPMFQTFSKKETEKPS) are disordered. Positions 11–26 (KSTVSNMLENPMFQTF) are enriched in polar residues.

This sequence belongs to the RSA3 family. Associates with nucleolar pre-ribosomal particles.

Its subcellular location is the nucleus. It localises to the nucleolus. In terms of biological role, required for efficient biogenesis of the 60S ribosomal subunit. The protein is Ribosome assembly protein 3 (rsa3) of Schizosaccharomyces pombe (strain 972 / ATCC 24843) (Fission yeast).